The chain runs to 321 residues: MTTPSTKLNSGYDMPLVGFGLWKVNNETCADQIYHAIKAGYRLFDGACDYGNEVEAGKGVARAIQEGIVKREDLFIVSKLWNSFHDGDRVEPICRKQLADWGLDYFDLFIVHFPIALKYVDPAVRYPPGWLSENNKLEFSNASIQETWTAMESLVDKKLARSIGVSNFSAQLLMDLLRYARIRPATLQIEHHPYLTQERLVTYAQKEGIAVTAYSSFGPLSFVELDLKDAHETPKLFDHDVIKGIAQKHGKTPAQVLLRWATQRNIAVIPKSNDPTRLAQNLDVTGWDLETSEIEVISSLNRNLRFNDPLAPSRLDPIPDD.

Residue tyrosine 50 is the Proton donor of the active site. Histidine 112 is a substrate binding site. NAD(+)-binding positions include 166-167, 215-224, and 271-281; these read SN, SSFGPLSFVE, and KSNDPTRLAQN.

Belongs to the aldo/keto reductase family.

The catalysed reaction is xylitol + NAD(+) = D-xylose + NADH + H(+). It catalyses the reaction xylitol + NADP(+) = D-xylose + NADPH + H(+). It functions in the pathway carbohydrate metabolism; D-xylose degradation. Catalyzes the initial reaction in the xylose utilization pathway by reducing D-xylose into xylitol. Xylose is a major component of hemicelluloses such as xylan. Most fungi utilize D-xylose via three enzymatic reactions, xylose reductase (XR), xylitol dehydrogenase (XDH), and xylulokinase, to form xylulose 5-phosphate, which enters pentose phosphate pathway. In Neosartorya fischeri (strain ATCC 1020 / DSM 3700 / CBS 544.65 / FGSC A1164 / JCM 1740 / NRRL 181 / WB 181) (Aspergillus fischerianus), this protein is Probable NAD(P)H-dependent D-xylose reductase xyl1 (xyl1).